A 65-amino-acid chain; its full sequence is DNA gyrase inhibitor YacG (65 aa).

The Zn(2+) site is built by cysteine 10, cysteine 13, cysteine 29, and cysteine 33. A disordered region spans residues 45–65 (EKAIPGAPDMSDSDGWSEDQY). Residues 55 to 65 (SDSDGWSEDQY) are compositionally biased toward acidic residues.

This sequence belongs to the DNA gyrase inhibitor YacG family. As to quaternary structure, interacts with GyrB. It depends on Zn(2+) as a cofactor.

Functionally, inhibits all the catalytic activities of DNA gyrase by preventing its interaction with DNA. Acts by binding directly to the C-terminal domain of GyrB, which probably disrupts DNA binding by the gyrase. In Vibrio cholerae serotype O1 (strain ATCC 39315 / El Tor Inaba N16961), this protein is DNA gyrase inhibitor YacG.